A 589-amino-acid polypeptide reads, in one-letter code: Arylsulfatase L (589 aa).

A signal peptide spans 1-31 (MLHLHHSCLCFRSWLPAMLAVLLSLAPSASS). Residues D46 and D47 each contribute to the Ca(2+) site. N-linked (GlcNAc...) asparagine glycosylation is present at N58. C86 is a Ca(2+) binding site. C86 serves as the catalytic Nucleophile. C86 carries the 3-oxoalanine (Cys) modification. N125 is a glycosylation site (N-linked (GlcNAc...) asparagine). Residue K145 participates in substrate binding. H147 is a catalytic residue. N-linked (GlcNAc...) asparagine glycosylation is present at N258. H301 contributes to the substrate binding site. N344 carries N-linked (GlcNAc...) asparagine glycosylation. Positions 353 and 354 each coordinate Ca(2+). Substrate is bound at residue K378.

The protein belongs to the sulfatase family. Ca(2+) serves as cofactor. Post-translationally, N-glycosylated. The conversion to 3-oxoalanine (also known as C-formylglycine, FGly), of a serine or cysteine residue in prokaryotes and of a cysteine residue in eukaryotes, is critical for catalytic activity. As to expression, expressed in the pancreas, liver and kidney.

The protein resides in the golgi apparatus. It localises to the golgi stack. It carries out the reaction an aryl sulfate + H2O = a phenol + sulfate + H(+). Its activity is regulated as follows. Inhibited by millimolar concentrations of warfarin. In terms of biological role, exhibits arylsulfatase activity towards the artificial substrate 4-methylumbelliferyl sulfate. May be essential for the correct composition of cartilage and bone matrix during development. Has no activity toward steroid sulfates. In Homo sapiens (Human), this protein is Arylsulfatase L.